The sequence spans 247 residues: Adenosylcobinamide-GDP ribazoletransferase (247 aa).

5 helical membrane-spanning segments follow: residues 34-54 (IVMF…IFIL), 59-79 (CGIP…TGGF), 113-133 (GGLA…ELAL), 138-158 (MLAA…LLMY), and 187-207 (LAVI…AMVV).

Belongs to the CobS family. Requires Mg(2+) as cofactor.

It localises to the cell inner membrane. The catalysed reaction is alpha-ribazole + adenosylcob(III)inamide-GDP = adenosylcob(III)alamin + GMP + H(+). It catalyses the reaction alpha-ribazole 5'-phosphate + adenosylcob(III)inamide-GDP = adenosylcob(III)alamin 5'-phosphate + GMP + H(+). The protein operates within cofactor biosynthesis; adenosylcobalamin biosynthesis; adenosylcobalamin from cob(II)yrinate a,c-diamide: step 7/7. Functionally, joins adenosylcobinamide-GDP and alpha-ribazole to generate adenosylcobalamin (Ado-cobalamin). Also synthesizes adenosylcobalamin 5'-phosphate from adenosylcobinamide-GDP and alpha-ribazole 5'-phosphate. The protein is Adenosylcobinamide-GDP ribazoletransferase of Salmonella dublin (strain CT_02021853).